The following is a 576-amino-acid chain: High-affinity choline transporter 1 (576 aa).

Residues Gly-6–Arg-26 traverse the membrane as a helical segment. Topologically, residues Lys-27–Asn-51 are cytoplasmic. Residues Ile-52 to Asn-72 form a helical membrane-spanning segment. Residues Gly-73–Gly-82 lie on the Extracellular side of the membrane. The chain crosses the membrane as a helical span at residues Leu-83–Phe-103. The Cytoplasmic portion of the chain corresponds to Ala-104–Arg-126. A helical transmembrane segment spans residues Ile-127–Leu-147. Residues Ser-148 to Ser-165 are Extracellular-facing. The chain crosses the membrane as a helical span at residues Val-166–Ala-186. The Cytoplasmic portion of the chain corresponds to Tyr-187 to Gln-192. The helical transmembrane segment at Leu-193–Ala-213 threads the bilayer. The Extracellular portion of the chain corresponds to Lys-214 to Thr-233. A helical transmembrane segment spans residues Ser-234 to Phe-254. Over Gln-255 to Ser-270 the chain is Cytoplasmic. Residues Phe-271 to Ala-291 traverse the membrane as a helical segment. Over Arg-292–Asn-319 the chain is Extracellular. An N-linked (GlcNAc...) asparagine glycan is attached at Asn-306. A helical transmembrane segment spans residues Met-320–Gly-340. Residues Ala-341–Glu-378 are Cytoplasmic-facing. A helical membrane pass occupies residues Val-379 to Leu-399. Topologically, residues Thr-400–Trp-408 are extracellular. A helical transmembrane segment spans residues Tyr-409 to Met-429. Topologically, residues Pro-430 to Ser-437 are cytoplasmic. A helical membrane pass occupies residues Leu-438–Leu-458. At Pro-459–Thr-478 the chain is on the extracellular side. A helical membrane pass occupies residues Thr-479–Phe-499. Topologically, residues Lys-500–Asn-576 are cytoplasmic. Positions Ala-541–Asn-576 are disordered. Polar residues predominate over residues Ser-566–Asn-576.

The protein belongs to the sodium:solute symporter (SSF) (TC 2.A.21) family. As to expression, detected in the nervous system, including the nerve ring and cholinergic motor neurons of the ventral nerve cord.

It is found in the membrane. Functionally, imports choline from the extracellular space to the neuron with high affinity. Choline uptake is the rate-limiting step in acetylcholine synthesis. Sodium ion and chloride ion dependent. In Caenorhabditis elegans, this protein is High-affinity choline transporter 1 (cho-1).